Here is a 96-residue protein sequence, read N- to C-terminus: RNA-binding protein Hfq (96 aa).

Residues Asp-9–Val-68 form the Sm domain. The segment at Ala-65–Glu-96 is disordered. A compositionally biased stretch (low complexity) spans His-70–Glu-96.

It belongs to the Hfq family. As to quaternary structure, homohexamer.

RNA chaperone that binds small regulatory RNA (sRNAs) and mRNAs to facilitate mRNA translational regulation in response to envelope stress, environmental stress and changes in metabolite concentrations. Also binds with high specificity to tRNAs. In Mannheimia succiniciproducens (strain KCTC 0769BP / MBEL55E), this protein is RNA-binding protein Hfq.